Here is a 370-residue protein sequence, read N- to C-terminus: 3,5-dihydroxyphenylacetyl-CoA synthase (370 aa).

Cys158 is a catalytic residue.

The protein belongs to the thiolase-like superfamily. Chalcone/stilbene synthases family.

It carries out the reaction 4 malonyl-CoA + 4 H(+) = (3,5-dihydroxyphenyl)acetyl-CoA + 4 CO2 + 3 CoA + H2O. Its pathway is antibiotic biosynthesis; vancomycin biosynthesis. Functionally, involved in the biosynthesis of the nonproteinogenic amino acid monomer (S)-3,5-dihydroxyphenylglycine (Dpg) responsible of the production of vancomycin and teicoplanin antibiotics. Catalyzes the Claisen condensation of four molecules of malonyl-CoA to yield 3,5-dihydroxyphenylacetyl-CoA (DPA-CoA) and three free coenzyme A (CoA). DpgA requires the presence of the dehydratases DpgB and DpgD to facilitate the aromatization of the DPA-S-DgpA or DPA-S-CoA intermediate. This is 3,5-dihydroxyphenylacetyl-CoA synthase (dpgA) from Amycolatopsis orientalis (Nocardia orientalis).